The following is a 38-amino-acid chain: Cytochrome b6-f complex subunit 5 (38 aa).

Residues 5–25 (LLCGIVLGLIPVTLLGLFVAA) form a helical membrane-spanning segment.

It belongs to the PetG family. The 4 large subunits of the cytochrome b6-f complex are cytochrome b6, subunit IV (17 kDa polypeptide, PetD), cytochrome f and the Rieske protein, while the 4 small subunits are PetG, PetL, PetM and PetN. The complex functions as a dimer.

The protein localises to the cellular thylakoid membrane. Functionally, component of the cytochrome b6-f complex, which mediates electron transfer between photosystem II (PSII) and photosystem I (PSI), cyclic electron flow around PSI, and state transitions. PetG is required for either the stability or assembly of the cytochrome b6-f complex. This Parasynechococcus marenigrum (strain WH8102) protein is Cytochrome b6-f complex subunit 5.